Reading from the N-terminus, the 524-residue chain is Decreased expression in renal and prostate cancer protein (524 aa).

Basic and acidic residues predominate over residues 1-12 (MKEPRIFPRERP). Disordered stretches follow at residues 1–43 (MKEP…TGHP) and 64–252 (PFPR…LDAR). Low complexity predominate over residues 129-148 (LNPRTGALPGPGPLSNPRLG). Residues 163-181 (GLLGAGPDPRGGGPMGPGS) are compositionally biased toward gly residues. Ser-302 carries the post-translational modification Phosphoserine. Residues 312–323 (PMGPNSGPSSRG) are compositionally biased toward low complexity. Residues 312 to 332 (PMGPNSGPSSRGIGLPGPNPS) are disordered. An Asymmetric dimethylarginine modification is found at Arg-364. Position 387 is an omega-N-methylarginine (Arg-387). Ser-423 bears the Phosphoserine mark.

This sequence belongs to the DERPC family. As to expression, ubiquitously expressed, with abundant expression in kidney, skeletal muscle, testis, liver, ovary, and heart and moderate expression in prostate. Expression is significantly reduced in renal and prostate tumors. No differential expression in breast cancer cells, between lobular carcinoma and normal lobules.

It localises to the nucleus. Functionally, potential tumor suppressor. Inhibits prostate tumor cell growth, when overexpressed. In Homo sapiens (Human), this protein is Decreased expression in renal and prostate cancer protein.